A 486-amino-acid chain; its full sequence is Serine/threonine-protein phosphatase 2A 56 kDa regulatory subunit alpha isoform (486 aa).

Ser-2 is modified (N-acetylserine). Residues Asp-22–Glu-52 are disordered. A compositionally biased stretch (basic residues) spans Lys-27–Arg-37. Positions Ser-38–Ala-51 are enriched in low complexity. 3 positions are modified to phosphoserine: Ser-41, Ser-42, and Ser-49.

The protein belongs to the phosphatase 2A regulatory subunit B56 family. PP2A consists of a common heterodimeric core enzyme, composed of a 36 kDa catalytic subunit (subunit C) and a 65 kDa constant regulatory subunit (PR65 or subunit A), that associates with a variety of regulatory subunits. Proteins that associate with the core dimer include three families of regulatory subunits B (the R2/B/PR55/B55, R3/B''/PR72/PR130/PR59 and R5/B'/B56 families), the 48 kDa variable regulatory subunit, viral proteins, and cell signaling molecules. Interacts with SGO1. Widely expressed with highest levels in thymus and ovary.

It is found in the cytoplasm. The protein resides in the nucleus. Its subcellular location is the chromosome. The protein localises to the centromere. Functionally, the B regulatory subunit might modulate substrate selectivity and catalytic activity, and might also direct the localization of the catalytic enzyme to a particular subcellular compartment. This chain is Serine/threonine-protein phosphatase 2A 56 kDa regulatory subunit alpha isoform (Ppp2r5a), found in Mus musculus (Mouse).